Consider the following 331-residue polypeptide: (E)-beta farnesene synthase MBR_03882 (331 aa).

The protein belongs to the trichodiene synthase family.

It carries out the reaction (2E,6E)-farnesyl diphosphate = (E)-beta-farnesene + diphosphate. Functionally, terpene synthase that catalyzes the conversion of (2E,6E)-farnesyl diphosphate (FPP) into the volatile sesquiterpene (E)-beta-farnesene. The protein is (E)-beta farnesene synthase MBR_03882 of Metarhizium brunneum (strain ARSEF 3297).